The sequence spans 440 residues: MSEFSQTVPELVAWARKNDFSISLPVDRLSFLLAVATLNGERLDGEMSEGELVDAFRHVSDAFEQTSETIGVRANNAINDMVRQRLLNRFTSEQAEGNAIYRLTPLGIGITDYYIRQREFSTLRLSMQLSIVAGELKRAADAAEEGGDEFHWHRNVYAPLKYSVAEIFDSIDLTQRLMDEQQQQVKDDIAQLLNKDWRAAISSCELLLSETSGTLRELQDTLEAAGDKLQANLLRIQDATMTHDDLHFVDRLVFDLQSKLDRIICWGQQSIDLWIGYDRHVHKFIRTAIDMDKNRVFAQRLRQSVQTYFDEPWALTYANADRLLDMRDEEMALRDEEVTGELPEDLEYEEFNEIREQLAAIIEEQLAVYKTRQVPLDLGLVVREYLSQYPRARHFDVARIVIDQAVRLGVAQADFTGLPAKWQPINDYGAKVQAHVIDKY.

Positions 208–236 (LSETSGTLRELQDTLEAAGDKLQANLLRI) are leucine-zipper.

It belongs to the MukF family. As to quaternary structure, interacts, and probably forms a ternary complex, with MukE and MukB via its C-terminal region. The complex formation is stimulated by calcium or magnesium. It is required for an interaction between MukE and MukB.

The protein resides in the cytoplasm. The protein localises to the nucleoid. Involved in chromosome condensation, segregation and cell cycle progression. May participate in facilitating chromosome segregation by condensation DNA from both sides of a centrally located replisome during cell division. Not required for mini-F plasmid partitioning. Probably acts via its interaction with MukB and MukE. Overexpression results in anucleate cells. It has a calcium binding activity. The polypeptide is Chromosome partition protein MukF (Escherichia coli (strain ATCC 8739 / DSM 1576 / NBRC 3972 / NCIMB 8545 / WDCM 00012 / Crooks)).